A 576-amino-acid chain; its full sequence is High-affinity choline transporter 1 (576 aa).

The helical transmembrane segment at 6–26 threads the bilayer; sequence GIVAIVFFYVLILVVGIWAGR. Over 27–51 the chain is Cytoplasmic; it reads KSKSSKELESEAGAATEEVMLAGRN. Residues 52–72 form a helical membrane-spanning segment; that stretch reads IGTLVGIFTMTATWVGGAYIN. Topologically, residues 73–82 are extracellular; the sequence is GTAEALYNGG. The helical transmembrane segment at 83 to 103 threads the bilayer; the sequence is LLGCQAPVGYAISLVMGGLLF. Residues 104–126 are Cytoplasmic-facing; the sequence is AKKMREEGYITMLDPFQHKYGQR. A helical membrane pass occupies residues 127-147; the sequence is IGGLMYVPALLGETFWTAAIL. Topologically, residues 148-165 are extracellular; the sequence is SALGATLSVILGIDMNAS. A helical transmembrane segment spans residues 166–186; that stretch reads VTLSACIAVFYTFTGGYYAVA. Residues 187-192 lie on the Cytoplasmic side of the membrane; that stretch reads YTDVVQ. The chain crosses the membrane as a helical span at residues 193-213; the sequence is LFCIFVGLWVCVPAAMVHDGA. Over 214-233 the chain is Extracellular; sequence KDISRNAGDWIGEIGGFKET. A helical membrane pass occupies residues 234–254; sequence SLWIDCMLLLVFGGIPWQVYF. Residues 255-270 lie on the Cytoplasmic side of the membrane; that stretch reads QRVLSSKTAHGAQTLS. Residues 271 to 291 form a helical membrane-spanning segment; it reads FVAGVGCILMAIPPALIGAIA. Topologically, residues 292-319 are extracellular; that stretch reads RNTDWRMTDYSPWNNGTKVESIPPDKRN. Residue Asn306 is glycosylated (N-linked (GlcNAc...) asparagine). A helical membrane pass occupies residues 320–340; sequence MVVPLVFQYLTPRWVAFIGLG. Topologically, residues 341 to 378 are cytoplasmic; the sequence is AVSAAVMSSADSSVLSAASMFAHNIWKLTIRPHASEKE. The helical transmembrane segment at 379–399 threads the bilayer; sequence VIIVMRIAIICVGIMATIMAL. Residues 400–408 lie on the Extracellular side of the membrane; the sequence is TIQSIYGLW. Residues 409–429 form a helical membrane-spanning segment; the sequence is YLCADLVYVILFPQLLCVVYM. Topologically, residues 430–437 are cytoplasmic; it reads PRSNTYGS. A helical transmembrane segment spans residues 438–458; that stretch reads LAGYAVGLVLRLIGGEPLVSL. At 459–478 the chain is on the extracellular side; that stretch reads PAFFHYPMYTDGVQYFPFRT. A helical transmembrane segment spans residues 479 to 499; sequence TAMLSSMATIYIVSIQSEKLF. At 500–576 the chain is on the cytoplasmic side; it reads KSGRLSPEWD…DQSYYSTNSN (77 aa). The segment at 541–576 is disordered; it reads APNGTPAPVHPNQQPSDENTLLHPYSDQSYYSTNSN. Over residues 566–576 the composition is skewed to polar residues; sequence SDQSYYSTNSN.

This sequence belongs to the sodium:solute symporter (SSF) (TC 2.A.21) family. Detected in the nervous system, including the nerve ring and cholinergic motor neurons of the ventral nerve cord.

It is found in the membrane. Functionally, imports choline from the extracellular space to the neuron with high affinity. Choline uptake is the rate-limiting step in acetylcholine synthesis. Sodium ion and chloride ion dependent. The sequence is that of High-affinity choline transporter 1 (cho-1) from Caenorhabditis elegans.